Here is a 631-residue protein sequence, read N- to C-terminus: Pescadillo homolog (631 aa).

One can recognise a BRCT domain in the interval 321–414 (RLRTLFKGLK…QLLPTNDYFL (94 aa)). Positions 428–442 (SKRDSYIPPEEKALH) are enriched in basic and acidic residues. Disordered regions lie at residues 428-471 (SKRD…EADQ), 489-561 (YKKY…VDEH), and 602-631 (ADNK…KLVK). Residues Ser-453 and Ser-457 each carry the phosphoserine modification. Composition is skewed to acidic residues over residues 453–471 (SEEE…EADQ) and 498–525 (VNED…EDVD). Residues 526–538 (EQTKRKQQEKEKM) are compositionally biased toward basic and acidic residues. A compositionally biased stretch (basic residues) spans 544–553 (KVHKVNKRQV). Positions 591–631 (WLLRKKRRNIDADNKEAKKAAKREARKQAAEAAARAAKLVK) form a coiled coil. Basic and acidic residues predominate over residues 602-619 (ADNKEAKKAAKREARKQA). A compositionally biased stretch (low complexity) spans 620 to 631 (AEAAARAAKLVK).

This sequence belongs to the pescadillo family.

Its subcellular location is the nucleus. The protein localises to the nucleolus. It is found in the nucleoplasm. Its function is as follows. Required for maturation of ribosomal RNAs and formation of the large ribosomal subunit. The sequence is that of Pescadillo homolog from Drosophila pseudoobscura pseudoobscura (Fruit fly).